Here is a 238-residue protein sequence, read N- to C-terminus: Orotidine 5'-phosphate decarboxylase (238 aa).

Substrate-binding positions include Asp-18, Lys-40, 67 to 76 (DMKLLDIDNT), Thr-122, Arg-183, Gln-192, and Arg-213. The active-site Proton donor is Lys-69.

This sequence belongs to the OMP decarboxylase family. Type 1 subfamily. Homodimer.

The catalysed reaction is orotidine 5'-phosphate + H(+) = UMP + CO2. It functions in the pathway pyrimidine metabolism; UMP biosynthesis via de novo pathway; UMP from orotate: step 2/2. In terms of biological role, catalyzes the decarboxylation of orotidine 5'-monophosphate (OMP) to uridine 5'-monophosphate (UMP). The sequence is that of Orotidine 5'-phosphate decarboxylase from Brucella canis (strain ATCC 23365 / NCTC 10854 / RM-666).